Consider the following 508-residue polypeptide: Bifunctional purine biosynthesis protein PurH (508 aa).

The MGS-like domain occupies 1 to 145 (MIKRALLSTY…KNYKDVIVVV (145 aa)).

Belongs to the PurH family.

It carries out the reaction (6R)-10-formyltetrahydrofolate + 5-amino-1-(5-phospho-beta-D-ribosyl)imidazole-4-carboxamide = 5-formamido-1-(5-phospho-D-ribosyl)imidazole-4-carboxamide + (6S)-5,6,7,8-tetrahydrofolate. The catalysed reaction is IMP + H2O = 5-formamido-1-(5-phospho-D-ribosyl)imidazole-4-carboxamide. It functions in the pathway purine metabolism; IMP biosynthesis via de novo pathway; 5-formamido-1-(5-phospho-D-ribosyl)imidazole-4-carboxamide from 5-amino-1-(5-phospho-D-ribosyl)imidazole-4-carboxamide (10-formyl THF route): step 1/1. Its pathway is purine metabolism; IMP biosynthesis via de novo pathway; IMP from 5-formamido-1-(5-phospho-D-ribosyl)imidazole-4-carboxamide: step 1/1. This is Bifunctional purine biosynthesis protein PurH from Petrotoga mobilis (strain DSM 10674 / SJ95).